Consider the following 554-residue polypeptide: (E)-nerolidol synthase TPS18VF (554 aa).

(2E,6E)-farnesyl diphosphate is bound by residues arginine 276, aspartate 313, aspartate 317, arginine 455, and aspartate 458. Mg(2+)-binding residues include aspartate 313 and aspartate 317. Residues 313–317 (DDIFD) carry the DDXXD motif motif. Mg(2+) is bound by residues aspartate 458, serine 462, and glutamate 466.

The protein belongs to the terpene synthase family. Tpsb subfamily. Mg(2+) serves as cofactor. The cofactor is Mn(2+). In terms of tissue distribution, highly expressed in glandular trichomes.

The catalysed reaction is (2E,6E)-farnesyl diphosphate + H2O = (6E)-nerolidol + diphosphate. It catalyses the reaction (2E)-geranyl diphosphate + H2O = (S)-linalool + diphosphate. The protein operates within secondary metabolite biosynthesis; terpenoid biosynthesis. Functionally, involved in sesquiterpene olefins biosynthesis, constituants of cannabinoids and terpenoids-rich resins. Catalyzes primarily the conversion of (2E)-farnesyl diphosphate to (E)-nerolidol, and the conversion of (2E)-geranyl diphosphate to (+)linalool. The sequence is that of (E)-nerolidol synthase TPS18VF from Cannabis sativa (Hemp).